We begin with the raw amino-acid sequence, 314 residues long: Bis(5'-nucleosyl)-tetraphosphatase, symmetrical (314 aa).

The disordered stretch occupies residues 267-314; the sequence is QVPGNPITHPPKTAQRPRQPRRRQRQRGGDQAQTGPAPTPASTGPAGG. The segment covering 297 to 314 has biased composition (low complexity); that stretch reads QAQTGPAPTPASTGPAGG.

Belongs to the Ap4A hydrolase family.

The catalysed reaction is P(1),P(4)-bis(5'-adenosyl) tetraphosphate + H2O = 2 ADP + 2 H(+). Hydrolyzes diadenosine 5',5'''-P1,P4-tetraphosphate to yield ADP. This Xanthomonas axonopodis pv. citri (strain 306) protein is Bis(5'-nucleosyl)-tetraphosphatase, symmetrical.